Here is a 683-residue protein sequence, read N- to C-terminus: Kinesin-like protein KIF2B (683 aa).

Thr125 bears the Phosphothreonine; by PLK1 mark. The stretch at 141–176 forms a coiled coil; it reads LMTQRKSACLREIEKLQKQRERRRRLHREIRAQRAR. Residue Ser204 is modified to Phosphoserine; by PLK1. Residues 213–543 form the Kinesin motor domain; sequence RICVCVRKRP…LRYANRVKEI (331 aa). 303-310 provides a ligand contact to ATP; the sequence is GQTGSGKT. The stretch at 640–672 forms a coiled coil; it reads QLLSILEKKIDILTEIRRKLKLLQADIQKENRH.

Belongs to the TRAFAC class myosin-kinesin ATPase superfamily. Kinesin family. MCAK/KIF2 subfamily. In terms of processing, phosphorylation at Thr-125 by PLK1 is required for activity in the correction of kinetochore-microtubules attachment errors, while phosphorylation at Ser-204 also by PLK1 is required for the kinetochore localization and activity in prometaphase.

It is found in the cytoplasm. The protein resides in the cytoskeleton. The protein localises to the microtubule organizing center. It localises to the centrosome. Its subcellular location is the spindle. It is found in the chromosome. The protein resides in the centromere. The protein localises to the kinetochore. Functionally, plus end-directed microtubule-dependent motor required for spindle assembly and chromosome movement during mitosis. Has microtubule depolymerization activity. Plays a role in chromosome congression. In Bos taurus (Bovine), this protein is Kinesin-like protein KIF2B.